The sequence spans 153 residues: Alpha-amylase type B isozyme (153 aa).

Residues Lys19, 25 to 27 (GWW), His38, Gln44, Lys123, and Trp150 each bind substrate.

It belongs to the glycosyl hydrolase 13 family. In terms of assembly, monomer. Requires Ca(2+) as cofactor.

It catalyses the reaction Endohydrolysis of (1-&gt;4)-alpha-D-glucosidic linkages in polysaccharides containing three or more (1-&gt;4)-alpha-linked D-glucose units.. The sequence is that of Alpha-amylase type B isozyme (AMY1.4) from Hordeum vulgare (Barley).